Here is a 365-residue protein sequence, read N- to C-terminus: tRNA/tmRNA (uracil-C(5))-methyltransferase (365 aa).

Residues Q189, Y217, N222, E238, and D298 each coordinate S-adenosyl-L-methionine. Catalysis depends on C323, which acts as the Nucleophile. E357 (proton acceptor) is an active-site residue.

Belongs to the class I-like SAM-binding methyltransferase superfamily. RNA M5U methyltransferase family. TrmA subfamily.

The enzyme catalyses uridine(54) in tRNA + S-adenosyl-L-methionine = 5-methyluridine(54) in tRNA + S-adenosyl-L-homocysteine + H(+). It carries out the reaction uridine(341) in tmRNA + S-adenosyl-L-methionine = 5-methyluridine(341) in tmRNA + S-adenosyl-L-homocysteine + H(+). Functionally, dual-specificity methyltransferase that catalyzes the formation of 5-methyluridine at position 54 (m5U54) in all tRNAs, and that of position 341 (m5U341) in tmRNA (transfer-mRNA). The sequence is that of tRNA/tmRNA (uracil-C(5))-methyltransferase from Psychromonas ingrahamii (strain DSM 17664 / CCUG 51855 / 37).